Here is a 572-residue protein sequence, read N- to C-terminus: MPVVEVDPDELRSLAAIEDKSDDELKDDLFALGLEFEGESDDGDFELEFAPDRLDRLSVEGIARSLRYQYGHDRGIDVPKTNDAEWTITVDESVPEARPYVTGAVVRGLDLDDTQLDSLIQLQEKLHATMGRNRAKGAIGVHDLTMLKGGGARSDGKPSKSITYRGVDPDGDRFVPLDDDAERTPAEVLDAHPTGETYGHLVDGLDRFPAIYDDIGLFSFPPVINGSRTEVDTGTRDLFIELTGTDQWTIDRMLAIICYALSARGGRIESVAVDYGDRTLTRPDLSTTTKTVSHDRIETTLGVDLAGTDVVDLLERSGLDAEADTEGELTYEVEIPAYRVDVLHPADIVDDVGRAFGFNELEPQYPDVSTVGGRHDRSRLEDAVRNTLVGLGFEDLLNFYMTSETELFDRMSLSPDDNAVGAREPPTITEPYSEDYTVVRTWALPSLLMVLENNTHRAYPQDLAEIGLVAGVDESKPTNVAEHRSVAGVVARTDASYEDAKARLQAIGSAFGVDIKTPPTDHPSFIDGRTAAVVIDGEPAGVIGELHPRVLVEHDLEVPVAGFEFRLDALAD.

A B5 domain is found at 285–363 (LSTTTKTVSH…RAFGFNELEP (79 aa)). Mg(2+)-binding residues include aspartate 341, aspartate 347, aspartate 350, and aspartate 351.

It belongs to the phenylalanyl-tRNA synthetase beta subunit family. Type 2 subfamily. In terms of assembly, tetramer of two alpha and two beta subunits. Requires Mg(2+) as cofactor.

It is found in the cytoplasm. It catalyses the reaction tRNA(Phe) + L-phenylalanine + ATP = L-phenylalanyl-tRNA(Phe) + AMP + diphosphate + H(+). The sequence is that of Phenylalanine--tRNA ligase beta subunit from Natronomonas pharaonis (strain ATCC 35678 / DSM 2160 / CIP 103997 / JCM 8858 / NBRC 14720 / NCIMB 2260 / Gabara) (Halobacterium pharaonis).